Reading from the N-terminus, the 425-residue chain is Serine--tRNA ligase (425 aa).

230–232 (TAE) is a binding site for L-serine. 261–263 (RSE) contributes to the ATP binding site. Glu-284 lines the L-serine pocket. 348–351 (EISS) is a binding site for ATP. Ser-384 serves as a coordination point for L-serine.

Belongs to the class-II aminoacyl-tRNA synthetase family. Type-1 seryl-tRNA synthetase subfamily. Homodimer. The tRNA molecule binds across the dimer.

It is found in the cytoplasm. It carries out the reaction tRNA(Ser) + L-serine + ATP = L-seryl-tRNA(Ser) + AMP + diphosphate + H(+). It catalyses the reaction tRNA(Sec) + L-serine + ATP = L-seryl-tRNA(Sec) + AMP + diphosphate + H(+). It functions in the pathway aminoacyl-tRNA biosynthesis; selenocysteinyl-tRNA(Sec) biosynthesis; L-seryl-tRNA(Sec) from L-serine and tRNA(Sec): step 1/1. Functionally, catalyzes the attachment of serine to tRNA(Ser). Is also able to aminoacylate tRNA(Sec) with serine, to form the misacylated tRNA L-seryl-tRNA(Sec), which will be further converted into selenocysteinyl-tRNA(Sec). The polypeptide is Serine--tRNA ligase (Streptococcus pyogenes serotype M2 (strain MGAS10270)).